Reading from the N-terminus, the 741-residue chain is Melanoma-associated antigen D4 (741 aa).

Residues 1-13 show a composition bias toward polar residues; the sequence is MAEGSFSVQSESY. Disordered stretches follow at residues 1–27, 136–206, 247–296, and 323–379; these read MAEGSFSVQSESYSVEDMDEGSDEVGE, RVAT…EGPS, MAFP…KALA, and PEGA…QPSL. Acidic residues predominate over residues 14–27; it reads SVEDMDEGSDEVGE. Polar residues-rich tracts occupy residues 140 to 151 and 187 to 196; these read PQVSGEDTQPTT and TSAQSQTGSP. Residues 354–363 show a composition bias toward acidic residues; it reads DEYESSEEER. The region spanning 413-611 is the MAGE domain; that stretch reads LQERANKLVK…REWKAHFLEA (199 aa). The segment at 700–720 is disordered; that stretch reads VSSGTNGGASTSVLDGPSTSS. Polar residues predominate over residues 701 to 720; that stretch reads SSGTNGGASTSVLDGPSTSS.

In terms of assembly, interacts with TRIM27. Expressed only in brain and ovary among normal tissues. Isoform 1 and isoform 2 are specifically expressed in glioma cells among cancer cells. Detected in some renal cell carcinoma samples.

Its function is as follows. May enhance ubiquitin ligase activity of RING-type zinc finger-containing E3 ubiquitin-protein ligases. Proposed to act through recruitment and/or stabilization of the Ubl-conjugating enzyme (E2) at the E3:substrate complex. The sequence is that of Melanoma-associated antigen D4 (MAGED4) from Homo sapiens (Human).